The primary structure comprises 256 residues: Pimeloyl-[acyl-carrier protein] methyl ester esterase (256 aa).

The AB hydrolase-1 domain maps to 15-242 (HLVLLHGWGL…AAHAPFISHP (228 aa)). Substrate contacts are provided by residues Trp22, 82–83 (SL), and 143–147 (FLALQ). The active-site Nucleophile is Ser82. Active-site residues include Asp207 and His235. Residue His235 participates in substrate binding.

This sequence belongs to the AB hydrolase superfamily. Carboxylesterase BioH family. As to quaternary structure, monomer.

The protein localises to the cytoplasm. It carries out the reaction 6-carboxyhexanoyl-[ACP] methyl ester + H2O = 6-carboxyhexanoyl-[ACP] + methanol + H(+). It participates in cofactor biosynthesis; biotin biosynthesis. In terms of biological role, the physiological role of BioH is to remove the methyl group introduced by BioC when the pimeloyl moiety is complete. It allows to synthesize pimeloyl-ACP via the fatty acid synthetic pathway through the hydrolysis of the ester bonds of pimeloyl-ACP esters. This Escherichia coli O45:K1 (strain S88 / ExPEC) protein is Pimeloyl-[acyl-carrier protein] methyl ester esterase.